The sequence spans 522 residues: Tyrosine-protein phosphatase 1 (522 aa).

Residues 32–63 (RSNSSISLSSSSHSSFSRMGSLGSLPTNSGSS) form a disordered region. Residues 33 to 63 (SNSSISLSSSSHSSFSRMGSLGSLPTNSGSS) show a composition bias toward low complexity. The Tyrosine-protein phosphatase domain maps to 97 to 471 (IKEEFRLLEE…LFCYKTILDE (375 aa)). The active-site Phosphocysteine intermediate is cysteine 310. The tract at residues 327 to 426 (MKKLDHYFKQ…DDAAESDLKY (100 aa)) is PTPase insert (Asn-rich). Residues 382 to 410 (NNNNNNNLNNNNNINNNSNGSNNTPQTEP) are compositionally biased toward low complexity. The disordered stretch occupies residues 382–420 (NNNNNNNLNNNNNINNNSNGSNNTPQTEPNNEEDDDDAA). Acidic residues predominate over residues 411–420 (NNEEDDDDAA).

The protein belongs to the protein-tyrosine phosphatase family. Non-receptor class subfamily. As to expression, expressed predominantly in anterior-like cells and to a lesser degree in prestalk cells.

The protein localises to the cytoplasm. The protein resides in the cell membrane. The enzyme catalyses O-phospho-L-tyrosyl-[protein] + H2O = L-tyrosyl-[protein] + phosphate. Functionally, may have a role in growth and in the early stages of development. Affects the timing of development. The polypeptide is Tyrosine-protein phosphatase 1 (ptpA1-1) (Dictyostelium discoideum (Social amoeba)).